A 249-amino-acid polypeptide reads, in one-letter code: Phosphoribosylaminoimidazole-succinocarboxamide synthase (249 aa).

Belongs to the SAICAR synthetase family.

The enzyme catalyses 5-amino-1-(5-phospho-D-ribosyl)imidazole-4-carboxylate + L-aspartate + ATP = (2S)-2-[5-amino-1-(5-phospho-beta-D-ribosyl)imidazole-4-carboxamido]succinate + ADP + phosphate + 2 H(+). It participates in purine metabolism; IMP biosynthesis via de novo pathway; 5-amino-1-(5-phospho-D-ribosyl)imidazole-4-carboxamide from 5-amino-1-(5-phospho-D-ribosyl)imidazole-4-carboxylate: step 1/2. The protein is Phosphoribosylaminoimidazole-succinocarboxamide synthase of Chloroflexus aurantiacus (strain ATCC 29366 / DSM 635 / J-10-fl).